The chain runs to 176 residues: Cathelicidin-2 (176 aa).

An N-terminal signal peptide occupies residues 1 to 29; sequence METQGASLSLGRWSLWLLLLGLVLPSASA. Gln-30 is subject to Pyrrolidone carboxylic acid. A propeptide spanning residues 30–130 is cleaved from the precursor; the sequence is QALSYREAVL…DINCNELQSV (101 aa). Cystine bridges form between Cys-85-Cys-96 and Cys-107-Cys-124. Residues 135–176 form a disordered region; the sequence is PIRRPPIRPPFRPPFRPPVRPPIRPPFRPPFRPPIGPFPGRR. The segment covering 141–176 has biased composition (pro residues); sequence IRPPFRPPFRPPVRPPIRPPFRPPFRPPIGPFPGRR. Residue Pro-173 is modified to Proline amide. A propeptide spans 174 to 176 (removed in mature form); the sequence is GRR.

It belongs to the cathelicidin family. Post-translationally, elastase is responsible for its maturation.

It localises to the secreted. Binds to the lipid A moiety of bacterial lipipolysaccharides (LPS), a glycolipid present in the outer membrane of all Gram-negative bacteria. Potent antimicrobial activity. The protein is Cathelicidin-2 (CATHL2) of Ovis aries (Sheep).